The primary structure comprises 98 residues: Integration host factor subunit alpha (98 aa).

Residues 52–73 form a disordered region; sequence FDLRQKSERPGRNPKTGEDIPI. The span at 54–73 shows a compositional bias: basic and acidic residues; the sequence is LRQKSERPGRNPKTGEDIPI.

The protein belongs to the bacterial histone-like protein family. As to quaternary structure, heterodimer of an alpha and a beta chain.

In terms of biological role, this protein is one of the two subunits of integration host factor, a specific DNA-binding protein that functions in genetic recombination as well as in transcriptional and translational control. The chain is Integration host factor subunit alpha from Pseudoalteromonas atlantica (strain T6c / ATCC BAA-1087).